A 190-amino-acid chain; its full sequence is TATA box-binding protein-like 1 (190 aa).

The protein belongs to the TBP family. As to quaternary structure, binds TFIIA and TFIIB.

The protein localises to the cytoplasm. Its subcellular location is the nucleus. Part of a specialized transcription system that mediates the transcription of most ribosomal proteins through the 5'-TCT-3' motif which is a core promoter element at these genes. Seems to also mediate the transcription of NF1. Does not bind the TATA box. This Pongo abelii (Sumatran orangutan) protein is TATA box-binding protein-like 1 (TBPL1).